The sequence spans 320 residues: Short-chain dehydrogenase TIC 32 B, chloroplastic (320 aa).

NADP(+) is bound by residues 40–46 (GGTSGIG), 92–93 (DL), Asn-119, and Thr-140. Residue Ser-174 coordinates substrate. Tyr-196 serves as the catalytic Proton acceptor. Positions 301 to 317 (DTTLADKLWDFSIKLVD) are interaction with calmodulin.

Belongs to the short-chain dehydrogenases/reductases (SDR) family. As to quaternary structure, part of the Tic complex.

Its subcellular location is the plastid. It is found in the chloroplast inner membrane. Involved in protein precursor import into chloroplasts. The protein is Short-chain dehydrogenase TIC 32 B, chloroplastic of Brassica napus (Rape).